Reading from the N-terminus, the 531-residue chain is tRNA-2-methylthio-N(6)-dimethylallyladenosine synthase (531 aa).

The interval 1–26 (MNEKQRLEQTGQIKTESHPADRKSAL) is disordered. The span at 15–26 (TESHPADRKSAL) shows a compositional bias: basic and acidic residues. The 119-residue stretch at 80–198 (RKFYIRTYGC…LPYILHEAYM (119 aa)) folds into the MTTase N-terminal domain. Positions 89, 125, 159, 235, 239, and 242 each coordinate [4Fe-4S] cluster. The Radical SAM core domain maps to 221–451 (RKGKIKAWVN…NDLVQEIAAK (231 aa)). A TRAM domain is found at 454 to 517 (KQYEGQVVEV…TWTLTGELVN (64 aa)).

The protein belongs to the methylthiotransferase family. MiaB subfamily. Monomer. The cofactor is [4Fe-4S] cluster.

The protein localises to the cytoplasm. It catalyses the reaction N(6)-dimethylallyladenosine(37) in tRNA + (sulfur carrier)-SH + AH2 + 2 S-adenosyl-L-methionine = 2-methylsulfanyl-N(6)-dimethylallyladenosine(37) in tRNA + (sulfur carrier)-H + 5'-deoxyadenosine + L-methionine + A + S-adenosyl-L-homocysteine + 2 H(+). In terms of biological role, catalyzes the methylthiolation of N6-(dimethylallyl)adenosine (i(6)A), leading to the formation of 2-methylthio-N6-(dimethylallyl)adenosine (ms(2)i(6)A) at position 37 in tRNAs that read codons beginning with uridine. The sequence is that of tRNA-2-methylthio-N(6)-dimethylallyladenosine synthase from Geobacillus kaustophilus (strain HTA426).